The chain runs to 334 residues: Holliday junction branch migration complex subunit RuvB (334 aa).

The segment at 1–181 is large ATPase domain (RuvB-L); it reads MSEFLTPERT…GIILELDFYT (181 aa). ADP contacts are provided by leucine 19 and arginine 20. The ATP site is built by glutamate 26, phenylalanine 27, and isoleucine 28. 8 residues coordinate ADP: phenylalanine 27, isoleucine 28, glycine 61, leucine 62, glycine 63, lysine 64, threonine 65, and threonine 66. Residues leucine 62 and glycine 63 each coordinate ATP. Residues 127-129 and arginine 170 contribute to the ATP site; that span reads EDF. ADP-binding residues include tyrosine 180, proline 216, and arginine 217. A small ATPAse domain (RuvB-S) region spans residues 182-255; it reads VKELKEIIKR…TMEVLNIDDE (74 aa). Proline 216 provides a ligand contact to ATP. Residues 256 to 334 form a head domain (RuvB-H) region; sequence GLDEFDRKIL…KYEVPENRLF (79 aa). Positions 309 and 314 each coordinate DNA.

The protein belongs to the RuvB family. Homohexamer. Forms an RuvA(8)-RuvB(12)-Holliday junction (HJ) complex. HJ DNA is sandwiched between 2 RuvA tetramers; dsDNA enters through RuvA and exits via RuvB. An RuvB hexamer assembles on each DNA strand where it exits the tetramer. Each RuvB hexamer is contacted by two RuvA subunits (via domain III) on 2 adjacent RuvB subunits; this complex drives branch migration. In the full resolvosome a probable DNA-RuvA(4)-RuvB(12)-RuvC(2) complex forms which resolves the HJ.

The protein resides in the cytoplasm. It carries out the reaction ATP + H2O = ADP + phosphate + H(+). In terms of biological role, the RuvA-RuvB-RuvC complex processes Holliday junction (HJ) DNA during genetic recombination and DNA repair, while the RuvA-RuvB complex plays an important role in the rescue of blocked DNA replication forks via replication fork reversal (RFR). RuvA specifically binds to HJ cruciform DNA, conferring on it an open structure. The RuvB hexamer acts as an ATP-dependent pump, pulling dsDNA into and through the RuvAB complex. RuvB forms 2 homohexamers on either side of HJ DNA bound by 1 or 2 RuvA tetramers; 4 subunits per hexamer contact DNA at a time. Coordinated motions by a converter formed by DNA-disengaged RuvB subunits stimulates ATP hydrolysis and nucleotide exchange. Immobilization of the converter enables RuvB to convert the ATP-contained energy into a lever motion, pulling 2 nucleotides of DNA out of the RuvA tetramer per ATP hydrolyzed, thus driving DNA branch migration. The RuvB motors rotate together with the DNA substrate, which together with the progressing nucleotide cycle form the mechanistic basis for DNA recombination by continuous HJ branch migration. Branch migration allows RuvC to scan DNA until it finds its consensus sequence, where it cleaves and resolves cruciform DNA. Its function is as follows. Promotes Holliday junction (HJ) branch migration in conjunction with RuvA. Subunits can be free, ADP- or ATP-bound; nucleotide binding changes during the reaction cycle. Has a DNA-dependent ATPase activity; dsDNA and supercoiled DNA but not ssDNA stimulate activity. This Thermotoga maritima (strain ATCC 43589 / DSM 3109 / JCM 10099 / NBRC 100826 / MSB8) protein is Holliday junction branch migration complex subunit RuvB.